Here is a 261-residue protein sequence, read N- to C-terminus: Triosephosphate isomerase (261 aa).

10–12 (NWK) is a substrate binding site. The active-site Electrophile is the H100. The active-site Proton acceptor is E172. Substrate is bound by residues G178, S218, and 239–240 (GG).

The protein belongs to the triosephosphate isomerase family. Homodimer.

Its subcellular location is the cytoplasm. It carries out the reaction D-glyceraldehyde 3-phosphate = dihydroxyacetone phosphate. It functions in the pathway carbohydrate biosynthesis; gluconeogenesis. Its pathway is carbohydrate degradation; glycolysis; D-glyceraldehyde 3-phosphate from glycerone phosphate: step 1/1. Involved in the gluconeogenesis. Catalyzes stereospecifically the conversion of dihydroxyacetone phosphate (DHAP) to D-glyceraldehyde-3-phosphate (G3P). The polypeptide is Triosephosphate isomerase (Mycobacteroides abscessus (strain ATCC 19977 / DSM 44196 / CCUG 20993 / CIP 104536 / JCM 13569 / NCTC 13031 / TMC 1543 / L948) (Mycobacterium abscessus)).